The primary structure comprises 468 residues: Tyrosine-protein phosphatase YopH (468 aa).

The tract at residues 127-194 (ARGHVSSHSH…TVSPYGPEAR (68 aa)) is disordered. Low complexity predominate over residues 130–141 (HVSSHSHSALHA). The Tyrosine-protein phosphatase domain occupies 152–461 (SHLDPRTPPL…DVLIKLAEGQ (310 aa)). Cys-403 acts as the Phosphocysteine intermediate in catalysis.

Belongs to the protein-tyrosine phosphatase family. Non-receptor class subfamily.

It localises to the secreted. It catalyses the reaction O-phospho-L-tyrosyl-[protein] + H2O = L-tyrosyl-[protein] + phosphate. Functionally, essential virulence determinant. This protein is a protein tyrosine phosphatase. The essential function of YopH in Yersinia pathogenesis is host-protein dephosphorylation. It contributes to the ability of the bacteria to resist phagocytosis by peritoneal macrophages. This is Tyrosine-protein phosphatase YopH (yopH) from Yersinia pseudotuberculosis serotype I (strain IP32953).